A 300-amino-acid chain; its full sequence is Cyclic nucleotide synthase CdnE01 (300 aa).

Positions 63, 65, and 137 each coordinate Mg(2+).

It belongs to the CD-NTase family. E01 subfamily. It depends on Mg(2+) as a cofactor.

Binds to and probably activated by a virus-derived, approximately 400 nucleotide RNA (called CBASS-activating bacteriophage RNA, cabRNA) that begins in the viral terminase subunit terS and extends into terL, as well as by a shorter RNA with part of the cabRNA sequence able to form a hairpin. RNA secondary and/or tertiary structure, as well as viral infection itself, are important for CdnE activation. Cyclic nucleotide synthase (second messenger synthase) of a CBASS antivirus system. CBASS (cyclic oligonucleotide-based antiphage signaling system) provides immunity against bacteriophage. The CD-NTase protein synthesizes cyclic nucleotides in response to infection; these serve as specific second messenger signals. The signals activate a diverse range of effectors, leading to bacterial cell death and thus abortive phage infection. A type I-B CBASS system. In terms of biological role, protects S.aureus against phage infection. When the CBASS operon (cdnE and the following gene) is introduced in S.aureus strain RN4220 there is strong protection against lytic DNA phages 80alpha-vir and phi-NM1-gamma-6 but little to no protection against phages phi-NM4-gamma-4 or phi-12-gamma-3. The chain is Cyclic nucleotide synthase CdnE01 from Staphylococcus haemolyticus.